Reading from the N-terminus, the 156-residue chain is Cell division protein SepF (156 aa).

Over residues 23 to 36 (SYEKEQTDMKKQQD) the composition is skewed to basic and acidic residues. The interval 23 to 49 (SYEKEQTDMKKQQDPPEQQDVTFPKAQ) is disordered.

This sequence belongs to the SepF family. In terms of assembly, homodimer. Interacts with FtsZ.

It localises to the cytoplasm. Cell division protein that is part of the divisome complex and is recruited early to the Z-ring. Probably stimulates Z-ring formation, perhaps through the cross-linking of FtsZ protofilaments. Its function overlaps with FtsA. This chain is Cell division protein SepF, found in Bacillus anthracis (strain CDC 684 / NRRL 3495).